The chain runs to 441 residues: Arginine biosynthesis bifunctional protein ArgJ, mitochondrial (441 aa).

Residues Thr-177, Lys-204, Thr-215, Glu-301, Asn-436, and Ser-441 each coordinate substrate. The active-site Nucleophile is Thr-215.

It belongs to the ArgJ family. As to quaternary structure, heterodimer of an alpha and a beta chain. The alpha and beta chains are autoproteolytically processed from a single precursor protein within the mitochondrion.

Its subcellular location is the mitochondrion matrix. It catalyses the reaction N(2)-acetyl-L-ornithine + L-glutamate = N-acetyl-L-glutamate + L-ornithine. The catalysed reaction is L-glutamate + acetyl-CoA = N-acetyl-L-glutamate + CoA + H(+). It functions in the pathway amino-acid biosynthesis; L-arginine biosynthesis; L-ornithine and N-acetyl-L-glutamate from L-glutamate and N(2)-acetyl-L-ornithine (cyclic): step 1/1. Its pathway is amino-acid biosynthesis; L-arginine biosynthesis; N(2)-acetyl-L-ornithine from L-glutamate: step 1/4. Its function is as follows. Catalyzes two activities which are involved in the cyclic version of arginine biosynthesis: the synthesis of acetylglutamate from glutamate and acetyl-CoA, and of ornithine by transacetylation between acetylornithine and glutamate. The chain is Arginine biosynthesis bifunctional protein ArgJ, mitochondrial from Candida glabrata (strain ATCC 2001 / BCRC 20586 / JCM 3761 / NBRC 0622 / NRRL Y-65 / CBS 138) (Yeast).